Reading from the N-terminus, the 449-residue chain is Protein phosphatase fem-2 (449 aa).

The segment at 28–34 (EEAFADE) is interaction with fem-1 and fem-3. Residues 54–56 (IRF) form an interaction with fem-3 region. One can recognise a PPM-type phosphatase domain in the interval 160 to 424 (GIHVSGDQLK…DNVSVVIGFL (265 aa)). Residues D202, G203, D370, and D415 each coordinate Mg(2+).

The protein belongs to the PP2C family. Component of a complex containing fem-1, fem-2 and fem-3. Interacts (via N-terminus) with fem-1 and fem-3. Component of the CBC(fem-1) E3 ubiquitin-protein ligase complex, at least composed of cul-2, elc-1, tra-1, fem-1, fem-2 and fem-3; mediates the ubiquitination and subsequent proteasomal degradation of tra-1. Interacts with tra-1. Interacts with sel-10. Mg(2+) is required as a cofactor. The cofactor is Mn(2+).

The catalysed reaction is O-phospho-L-seryl-[protein] + H2O = L-seryl-[protein] + phosphate. It carries out the reaction O-phospho-L-threonyl-[protein] + H2O = L-threonyl-[protein] + phosphate. Its function is as follows. Dephosphorylates auto-phosphorylated Ca(2+)/calmodulin-dependent protein kinase unc-43/CAMKII in vitro. Involved in the regulation of sex determination. Together with fem-3, required for male sexual development by promoting the proteasomal-mediated degradation of tra-1, a transcription repressor of male-specific genes. Promotes apoptosis. The chain is Protein phosphatase fem-2 from Caenorhabditis elegans.